The following is a 208-amino-acid chain: LexA repressor (208 aa).

The segment at residues 28 to 48 (RAEIARELGFRSANAAEEHLK) is a DNA-binding region (H-T-H motif). Residues Ser125 and Lys162 each act as for autocatalytic cleavage activity in the active site.

It belongs to the peptidase S24 family. In terms of assembly, homodimer.

The enzyme catalyses Hydrolysis of Ala-|-Gly bond in repressor LexA.. Functionally, represses a number of genes involved in the response to DNA damage (SOS response), including recA and lexA. In the presence of single-stranded DNA, RecA interacts with LexA causing an autocatalytic cleavage which disrupts the DNA-binding part of LexA, leading to derepression of the SOS regulon and eventually DNA repair. The polypeptide is LexA repressor (Aliivibrio fischeri (strain MJ11) (Vibrio fischeri)).